The sequence spans 331 residues: 6-phosphogluconolactonase (331 aa).

Belongs to the cycloisomerase 2 family.

It carries out the reaction 6-phospho-D-glucono-1,5-lactone + H2O = 6-phospho-D-gluconate + H(+). It functions in the pathway carbohydrate degradation; pentose phosphate pathway; D-ribulose 5-phosphate from D-glucose 6-phosphate (oxidative stage): step 2/3. In terms of biological role, catalyzes the hydrolysis of 6-phosphogluconolactone to 6-phosphogluconate. This Salmonella gallinarum (strain 287/91 / NCTC 13346) protein is 6-phosphogluconolactonase.